A 276-amino-acid polypeptide reads, in one-letter code: 3-methyl-2-oxobutanoate hydroxymethyltransferase (276 aa).

Residues D45 and D84 each contribute to the Mg(2+) site. Residues 45–46, D84, and K114 each bind 3-methyl-2-oxobutanoate; that span reads DS. E116 is a Mg(2+) binding site. E183 serves as the catalytic Proton acceptor.

It belongs to the PanB family. As to quaternary structure, homodecamer; pentamer of dimers. It depends on Mg(2+) as a cofactor.

Its subcellular location is the cytoplasm. The enzyme catalyses 3-methyl-2-oxobutanoate + (6R)-5,10-methylene-5,6,7,8-tetrahydrofolate + H2O = 2-dehydropantoate + (6S)-5,6,7,8-tetrahydrofolate. The protein operates within cofactor biosynthesis; (R)-pantothenate biosynthesis; (R)-pantoate from 3-methyl-2-oxobutanoate: step 1/2. Catalyzes the reversible reaction in which hydroxymethyl group from 5,10-methylenetetrahydrofolate is transferred onto alpha-ketoisovalerate to form ketopantoate. The polypeptide is 3-methyl-2-oxobutanoate hydroxymethyltransferase (Syntrophomonas wolfei subsp. wolfei (strain DSM 2245B / Goettingen)).